The chain runs to 660 residues: DNA mismatch repair protein MutL (660 aa).

It belongs to the DNA mismatch repair MutL/HexB family.

Functionally, this protein is involved in the repair of mismatches in DNA. It is required for dam-dependent methyl-directed DNA mismatch repair. May act as a 'molecular matchmaker', a protein that promotes the formation of a stable complex between two or more DNA-binding proteins in an ATP-dependent manner without itself being part of a final effector complex. The sequence is that of DNA mismatch repair protein MutL from Streptococcus pyogenes serotype M1.